A 147-amino-acid chain; its full sequence is Large ribosomal subunit protein bL9 (147 aa).

Belongs to the bacterial ribosomal protein bL9 family.

Binds to the 23S rRNA. The chain is Large ribosomal subunit protein bL9 from Myxococcus xanthus (strain DK1622).